The primary structure comprises 849 residues: Alanine--tRNA ligase (849 aa).

Histidine 551, histidine 555, cysteine 653, and histidine 657 together coordinate Zn(2+).

It belongs to the class-II aminoacyl-tRNA synthetase family. It depends on Zn(2+) as a cofactor.

The protein resides in the cytoplasm. The catalysed reaction is tRNA(Ala) + L-alanine + ATP = L-alanyl-tRNA(Ala) + AMP + diphosphate. Catalyzes the attachment of alanine to tRNA(Ala) in a two-step reaction: alanine is first activated by ATP to form Ala-AMP and then transferred to the acceptor end of tRNA(Ala). Also edits incorrectly charged Ser-tRNA(Ala) and Gly-tRNA(Ala) via its editing domain. This Sulfurimonas denitrificans (strain ATCC 33889 / DSM 1251) (Thiomicrospira denitrificans (strain ATCC 33889 / DSM 1251)) protein is Alanine--tRNA ligase.